The sequence spans 130 residues: Large ribosomal subunit protein bL12 (130 aa).

It belongs to the bacterial ribosomal protein bL12 family. Homodimer. Part of the ribosomal stalk of the 50S ribosomal subunit. Forms a multimeric L10(L12)X complex, where L10 forms an elongated spine to which 2 to 4 L12 dimers bind in a sequential fashion. Binds GTP-bound translation factors.

Functionally, forms part of the ribosomal stalk which helps the ribosome interact with GTP-bound translation factors. Is thus essential for accurate translation. This Nostoc punctiforme (strain ATCC 29133 / PCC 73102) protein is Large ribosomal subunit protein bL12.